The sequence spans 435 residues: Histone acetyltransferase type B subunit 2 (435 aa).

5 WD repeats span residues 135–175 (NHAG…SKAP), 188–228 (GQTK…KQDP), 238–278 (GHSA…TAKA), 284–324 (GHNA…TKHH), and 328–368 (AHTN…AEQT). The segment at 370–374 (DDAED) is interaction with the histone H4 N-terminus. The stretch at 385-425 (GHTSKVCDISWSPSSPWTIASASEDNILQVWEPSRHLRTPY) is one WD 6 repeat.

This sequence belongs to the WD repeat RBAP46/RBAP48/MSI1 family. Component of the HAT-B complex composed of at least HAT1 and HAT2. The HAT-B complex binds to histone H4 tail.

It is found in the cytoplasm. It localises to the nucleus. Its function is as follows. Regulatory subunit of the histone acetylase B (HAT-B) complex. The complex acetylates 'Lys-12' of histone H4 which is required for telomeric silencing. The chain is Histone acetyltransferase type B subunit 2 (HAT2) from Cryptococcus neoformans var. neoformans serotype D (strain B-3501A) (Filobasidiella neoformans).